The following is a 328-amino-acid chain: Methionyl-tRNA formyltransferase (328 aa).

110 to 113 (SLLP) contributes to the (6S)-5,6,7,8-tetrahydrofolate binding site.

Belongs to the Fmt family.

It carries out the reaction L-methionyl-tRNA(fMet) + (6R)-10-formyltetrahydrofolate = N-formyl-L-methionyl-tRNA(fMet) + (6S)-5,6,7,8-tetrahydrofolate + H(+). Its function is as follows. Attaches a formyl group to the free amino group of methionyl-tRNA(fMet). The formyl group appears to play a dual role in the initiator identity of N-formylmethionyl-tRNA by promoting its recognition by IF2 and preventing the misappropriation of this tRNA by the elongation apparatus. This Prochlorococcus marinus (strain MIT 9215) protein is Methionyl-tRNA formyltransferase.